The primary structure comprises 506 residues: Maturase K (506 aa).

It belongs to the intron maturase 2 family. MatK subfamily.

It is found in the plastid. It localises to the chloroplast. Its function is as follows. Usually encoded in the trnK tRNA gene intron. Probably assists in splicing its own and other chloroplast group II introns. The protein is Maturase K of Trifolium hirtum (Rose clover).